The sequence spans 198 residues: Ribosomal RNA small subunit methyltransferase G (198 aa).

Residues Gly-74, Phe-79, 123-124, and Arg-136 each bind S-adenosyl-L-methionine; that span reads IQ.

The protein belongs to the methyltransferase superfamily. RNA methyltransferase RsmG family.

Its subcellular location is the cytoplasm. It catalyses the reaction guanosine(527) in 16S rRNA + S-adenosyl-L-methionine = N(7)-methylguanosine(527) in 16S rRNA + S-adenosyl-L-homocysteine. Specifically methylates the N7 position of guanine in position 527 of 16S rRNA. This is Ribosomal RNA small subunit methyltransferase G from Orientia tsutsugamushi (strain Ikeda) (Rickettsia tsutsugamushi).